The following is a 426-amino-acid chain: Inhibin beta A chain (426 aa).

Residues 1–20 form the signal peptide; sequence MPLLWLRGFLLASCWIIVRS. Residues 21-310 constitute a propeptide that is removed on maturation; it reads SPTPGSEGHS…EDHPHRRRRR (290 aa). N-linked (GlcNAc...) asparagine glycosylation is present at Asn-165. Positions 259-288 are disordered; it reads KKKKKEEEGEGKKKGGGEGGAGADEEKEQS. The span at 263–274 shows a compositional bias: basic and acidic residues; it reads KEEEGEGKKKGG. 4 cysteine pairs are disulfide-bonded: Cys-314-Cys-322, Cys-321-Cys-391, Cys-350-Cys-423, and Cys-354-Cys-425.

This sequence belongs to the TGF-beta family. As to quaternary structure, dimeric, linked by one or more disulfide bonds. Inhibin A is a dimer of alpha/INHA and beta-A/INHBA. Activin A is a homodimer of beta-A/INHBA. Activin AB is a dimer of beta-A/INHBA and beta-B/INHBB. Interacts with FST and FSTL3; these interactions prevent activin A interaction to its type II receptor. Activin A interacts with ACVR2A. Activin A interacts with BMPR2. Inhibin A interacts with ACVR1; this interaction creates a non-signaling complex (NSC) that inhibits ACVR1-mediated BMP signaling. Inhibin A interacts with ACVR2A.

It localises to the secreted. In terms of biological role, inhibins/activins are involved in regulating a number of diverse functions such as hypothalamic and pituitary hormone secretion, gonadal hormone secretion, germ cell development and maturation, erythroid differentiation, insulin secretion, nerve cell survival, embryonic axial development or bone growth, depending on their subunit composition. Its function is as follows. Activin A is a homodimer of INHBA that plays a role in several essential biological processes including embryonic development, stem cell maintenance and differentiation, haematopoiesis, cell proliferation and tissue fibrosis. Signals through type I (such as ACVR1B or ACVR1C) and type II receptors (such as ACVR2A, ACVR2B or BMPR2) which, upon ligand binding, phosphorylate SMAD2 and SMAD3 intracellular signaling mediators that form a complex with SMAD4, translocate to the nucleus and modulate gene expression. Can also activate alternative non-canonical intracellular signaling pathways including the p38 MAPK, extracellular signal-regulated kinases 1/2 (ERK1/2) and c-Jun N-terminal kinases (JNKs) to modulate cell migration and differentiation. Alternatively, promotes osteoblastic differentiation via ACVRL1-SMAD1/5/9 pathway. In addition, can engage the type I receptor ACVR1 to form an ACVR1-activin A-type II receptor non-signaling complex (NSC) that renders receptors unavailable for engagement with BMPs, hence resulting in an apparent inhibition of ACVR1-mediated BMP signaling. Functionally, inhibin A is a dimer of alpha/INHA and beta-A/INHBA that functions as a feedback regulator in the hypothalamic-pituitary-gonadal (HPG) axis. Inhibits the secretion of FSH from the anterior pituitary gland by acting on pituitary gonadotrope cells. Antagonizes activin A by binding to the proteoglycan, betaglycan, and forming a stable complex with and, thereby, sequestering type II activin receptors while excluding type I receptor. In Homo sapiens (Human), this protein is Inhibin beta A chain (INHBA).